Consider the following 112-residue polypeptide: MNTLIAFAVLLLLSTTLGDTDDKVSHEEIQERKELSGISEELLLQQLEAVEAALMEKERLEEMEEDGNSREKRCMALNVPCDSHFKCCKNLVCQDPTLTWFYGSKYCYRKKS.

An N-terminal signal peptide occupies residues 1–18; the sequence is MNTLIAFAVLLLLSTTLG. Positions 19–73 are excised as a propeptide; it reads DTDDKVSHEEIQERKELSGISEELLLQQLEAVEAALMEKERLEEMEEDGNSREKR. 3 disulfides stabilise this stretch: cysteine 74–cysteine 88, cysteine 81–cysteine 93, and cysteine 87–cysteine 107.

This sequence belongs to the neurotoxin 14 (magi-1) family. 08 (Ltx-4) subfamily. As to expression, expressed by the venom gland.

The protein localises to the secreted. Its function is as follows. Probable ion channel inhibitor. The chain is U15-hexatoxin-Hi1a from Hadronyche infensa (Fraser island funnel-web spider).